The primary structure comprises 351 residues: Uroporphyrinogen decarboxylase (351 aa).

Substrate contacts are provided by residues 25–29, Asp-74, Tyr-151, Ser-206, and His-325; that span reads RQAGR.

It belongs to the uroporphyrinogen decarboxylase family. As to quaternary structure, homodimer.

The protein localises to the cytoplasm. The enzyme catalyses uroporphyrinogen III + 4 H(+) = coproporphyrinogen III + 4 CO2. It functions in the pathway porphyrin-containing compound metabolism; protoporphyrin-IX biosynthesis; coproporphyrinogen-III from 5-aminolevulinate: step 4/4. Its function is as follows. Catalyzes the decarboxylation of four acetate groups of uroporphyrinogen-III to yield coproporphyrinogen-III. The polypeptide is Uroporphyrinogen decarboxylase (Pelodictyon phaeoclathratiforme (strain DSM 5477 / BU-1)).